A 524-amino-acid polypeptide reads, in one-letter code: L-tyrosine:2-oxoglutarate aminotransferase atrD (524 aa).

It belongs to the class-I pyridoxal-phosphate-dependent aminotransferase family. Requires pyridoxal 5'-phosphate as cofactor.

It catalyses the reaction L-tyrosine + 2-oxoglutarate = 3-(4-hydroxyphenyl)pyruvate + L-glutamate. It functions in the pathway secondary metabolite biosynthesis. The L-tyrosine:2-oxoglutarate aminotransferase atrD and the atromentin synthetase atrA catalyze consecutive steps to turn over L-tyrosine into atromentin, which represents the generic precursor molecule for the entire terphenylquinone and pulvinic acid family of pigments, which are widely distributed secondary metabolites in homobasidiomycetes. The first step is catalyzed by atrD which converts L-tyrosine in to 4-hydroxyphenylpyruvate (4-HPP). Adenylation of two 4-HPP monomers by the atrA adenylation (A) domain, ester bond formation between monomers and atrA, and symmetric C-C-bond formation between two monomers by atrA leads to atromentin. The sequence is that of L-tyrosine:2-oxoglutarate aminotransferase atrD from Tapinella panuoides (Oyster rollrim mushroom).